A 388-amino-acid polypeptide reads, in one-letter code: Envelope protein F13 homolog (388 aa).

Residue Gly2 is the site of N-myristoyl glycine; by host attachment. The region spanning 310-337 (GDAINNTKLLVVDDEYVHVSNADIDGTH) is the PLD phosphodiesterase domain.

It localises to the virion membrane. The protein resides in the host endoplasmic reticulum membrane. In terms of biological role, envelope protein associated with the inner side of the enveloped virion (EV) membrane. The sequence is that of Envelope protein F13 homolog (P43K) from Molluscum contagiosum virus subtype 2 (MOCV).